The primary structure comprises 215 residues: Probable transaldolase (215 aa).

Lysine 83 serves as the catalytic Schiff-base intermediate with substrate.

This sequence belongs to the transaldolase family. Type 3B subfamily.

Its subcellular location is the cytoplasm. The enzyme catalyses D-sedoheptulose 7-phosphate + D-glyceraldehyde 3-phosphate = D-erythrose 4-phosphate + beta-D-fructose 6-phosphate. The protein operates within carbohydrate degradation; pentose phosphate pathway; D-glyceraldehyde 3-phosphate and beta-D-fructose 6-phosphate from D-ribose 5-phosphate and D-xylulose 5-phosphate (non-oxidative stage): step 2/3. Functionally, transaldolase is important for the balance of metabolites in the pentose-phosphate pathway. The sequence is that of Probable transaldolase from Pelotomaculum thermopropionicum (strain DSM 13744 / JCM 10971 / SI).